Here is a 785-residue protein sequence, read N- to C-terminus: Protein SEY1 (785 aa).

The interval 1–31 (MASAAPINLRAQDTPYVPPTSLPTSSSQTGS) is disordered. Residues 1 to 689 (MASAAPINLR…KRSTVASIAQ (689 aa)) lie on the Cytoplasmic side of the membrane. Residues 22 to 31 (LPTSSSQTGS) are compositionally biased toward low complexity. Residues 61 to 281 (GFSYNIVAVF…SSDYLFKPAY (221 aa)) form the GB1/RHD3-type G domain. 71–78 (GSQSTGKS) contributes to the GTP binding site. Positions 458-482 (SWEEELELLRDEIRAVADQCRKDET) form a coiled coil. A helical transmembrane segment spans residues 690 to 710 (IPYWIYGVLVVLGWNEAMLVL). Topologically, residues 711–713 (FNP) are lumenal. The helical transmembrane segment at 714–734 (LYFAFLLLAMATSYIIAQLGL) threads the bilayer. The Cytoplasmic segment spans residues 735-785 (VGPLFQVTRTVGSEIQRQATARLREHFSQPVLAEPVQVGPSRDREEVGQIQ).

This sequence belongs to the TRAFAC class dynamin-like GTPase superfamily. GB1/RHD3 GTPase family. RHD3 subfamily.

It is found in the endoplasmic reticulum membrane. Cooperates with the reticulon proteins and tubule-shaping DP1 family proteins to generate and maintain the structure of the tubular endoplasmic reticulum network. Has GTPase activity, which is required for its function in ER organization. The polypeptide is Protein SEY1 (Laccaria bicolor (strain S238N-H82 / ATCC MYA-4686) (Bicoloured deceiver)).